The chain runs to 335 residues: Nod factor export ATP-binding protein I (335 aa).

In terms of domain architecture, ABC transporter spans 37–267; that stretch reads IDVASVTKSY…KIGCQVIEIY (231 aa). 69–76 lines the ATP pocket; the sequence is GPNGAGKS.

Belongs to the ABC transporter superfamily. Lipooligosaccharide exporter (TC 3.A.1.102) family. In terms of assembly, the complex is composed of two ATP-binding proteins (NodI) and two transmembrane proteins (NodJ).

Its subcellular location is the cell inner membrane. Part of the ABC transporter complex NodIJ involved in the export of the nodulation factors (Nod factors), the bacterial signal molecules that induce symbiosis and subsequent nodulation induction. Nod factors are LCO (lipo-chitin oligosaccharide), a modified beta-1,4-linked N-acetylglucosamine oligosaccharide. This subunit is responsible for energy coupling to the transport system. The sequence is that of Nod factor export ATP-binding protein I from Rhizobium meliloti (strain 1021) (Ensifer meliloti).